We begin with the raw amino-acid sequence, 889 residues long: Potassium/sodium hyperpolarization-activated cyclic nucleotide-gated channel 2 (889 aa).

Residues 1–10 are compositionally biased toward gly residues; sequence MDARGGGGRP. Residues 1 to 159 form a disordered region; sequence MDARGGGGRP…GPAGEPRGSQ (159 aa). The Cytoplasmic portion of the chain corresponds to 1-215; sequence MDARGGGGRP…PYSDFRFYWD (215 aa). Residues 17–55 show a composition bias toward pro residues; the sequence is TPAPGPPPPPPPAPPQQQPPPPPPPAPPPGPGPAPPQHP. Residues 129–155 are compositionally biased toward low complexity; that stretch reads GAASGPAPGPGPAEEAGSEEAGPAGEP. A phosphoserine mark is found at Ser-146 and Ser-161. The segment at 158–209 is involved in subunit assembly; that stretch reads SQASFMQRQFGALLQPGVNKFSLRMFGSQKAVEREQERVKSAGAWIIHPYSD. A helical transmembrane segment spans residues 216–236; the sequence is FTMLLFMVGNLIIIPVGITFF. The Extracellular segment spans residues 237 to 240; sequence KDET. The helical transmembrane segment at 241–261 threads the bilayer; sequence TAPWIVFNVVSDTFFLMDLVL. The Cytoplasmic segment spans residues 262–288; the sequence is NFRTGIVIEDNTEIILDPEKIKKKYLR. A helical transmembrane segment spans residues 289–309; the sequence is TWFVVDFVSSIPVDYIFLIVE. Over 310–317 the chain is Extracellular; that stretch reads KGIDSEVY. Residues 318–338 traverse the membrane as a helical; Voltage-sensor segment; sequence KTARALRIVRFTKILSLLRLL. Topologically, residues 339–369 are cytoplasmic; the sequence is RLSRLIRYIHQWEEIFHMTYDLASAVMRICN. The chain crosses the membrane as a helical span at residues 370 to 390; sequence LISMMLLLCHWDGCLQFLVPM. Residues 391–413 are Extracellular-facing; it reads LQDFPRNCWVSINGMVNHSWSEL. A glycan (N-linked (GlcNAc...) asparagine) is linked at Asn-407. The segment at residues 414-435 is an intramembrane region (pore-forming); the sequence is YSFALFKAMSHMLCIGYGRQAP. The Extracellular segment spans residues 436-440; sequence ESMTD. Residues 441 to 461 form a helical membrane-spanning segment; the sequence is IWLTMLSMIVGATCYAMFIGH. The Cytoplasmic portion of the chain corresponds to 462–889; sequence ATALIQSLDS…SARSRLSSNL (428 aa). The 3',5'-cyclic AMP site is built by Met-599, Gly-608, Glu-609, Ile-610, Cys-611, Arg-618, Thr-619, and Arg-659. Residue Ser-668 is modified to Phosphoserine; by PKG/PRKG2. Residue Ser-754 is modified to Phosphoserine. The segment at 754-889 is disordered; it reads SPRLVRRPPP…SARSRLSSNL (136 aa). Arg-756 is modified (omega-N-methylarginine). Pro residues predominate over residues 760-784; it reads RPPPGPAPAAASPGPPPPASPPGAP. Ser-771, Ser-779, Ser-786, Ser-866, and Ser-868 each carry phosphoserine. Over residues 785–860 the composition is skewed to low complexity; sequence ASPRAPRTSP…TPAARAAAPS (76 aa).

This sequence belongs to the potassium channel HCN family. Homotetramer. The channel is composed of a homo- or heterotetrameric complex of pore-forming subunits. Heterotetramer with HCN1. Forms an obligate 4:4 complex with accessory subunit PEX5L. Interacts with KCNE2. Post-translationally, phosphorylation at Ser-668 by PRKG2 shifts the voltage-dependence to more negative voltages, hence counteracting the stimulatory effect of cGMP on gating. S-palmitoylated. In terms of processing, N-glycosylated; required for cell surface trafficking of HCN2. Highly expressed throughout the brain. Detected at low levels in heart.

The protein localises to the cell membrane. The catalysed reaction is Na(+)(in) = Na(+)(out). The enzyme catalyses K(+)(in) = K(+)(out). It carries out the reaction NH4(+)(in) = NH4(+)(out). Activated by cAMP, and at 10-100 times higher concentrations, also by cGMP. cAMP binding causes a conformation change that leads to the assembly of an active tetramer and channel opening. Binding of cAMP removes a tonic inhibition conferred by cyclic nucleotide-binding domain (CNBD) on channel opening. Channel activity is modulated by intracellular chloride ions and pH; acidic pH shifts the activation to more negative voltages. Inhibited by extracellular cesium ions. In terms of biological role, hyperpolarization-activated ion channel that is permeable to sodium and potassium ions. Displays lower selectivity for K(+) over Na(+) ions. Contributes to the native pacemaker currents in heart (If) and in neurons (Ih). Can also transport ammonium in the distal nephron. Involved in the initiation of neuropathic pain in sensory neurons. This is Potassium/sodium hyperpolarization-activated cyclic nucleotide-gated channel 2 from Homo sapiens (Human).